Here is a 534-residue protein sequence, read N- to C-terminus: Probable cytochrome c oxidase subunit 1 (534 aa).

8 consecutive transmembrane segments (helical) span residues 35 to 55 (IMYI…SLLF), 76 to 96 (VLIT…ALFS), 97 to 117 (GFGN…FPRL), 120 to 140 (ISFW…FIDG), 165 to 185 (VAIF…INLI), 202 to 222 (PLFV…MPVL), 254 to 274 (LFWF…FGIV), and 286 to 306 (IFGY…GFIV). His81 serves as a coordination point for Fe(II)-heme a. His260 and Tyr264 together coordinate Cu cation. The segment at residues 260 to 264 (HPEVY) is a cross-link (1'-histidyl-3'-tyrosine (His-Tyr)). The Cu cation site is built by His309 and His310. The next 2 membrane-spanning stretches (helical) occupy residues 320 to 340 (ALIY…IKIF) and 357 to 377 (MLFA…GIIL). Heme a3 is bound at residue His395. 3 helical membrane-spanning segments follow: residues 396–416 (FHYT…YYWF), 433–453 (FWIT…LGLA), and 475–495 (IGAG…FYTL). A Fe(II)-heme a-binding site is contributed by His397.

It belongs to the heme-copper respiratory oxidase family.

The protein localises to the cell membrane. It catalyses the reaction 4 Fe(II)-[cytochrome c] + O2 + 8 H(+)(in) = 4 Fe(III)-[cytochrome c] + 2 H2O + 4 H(+)(out). The protein operates within energy metabolism; oxidative phosphorylation. Cytochrome c oxidase is the component of the respiratory chain that catalyzes the reduction of oxygen to water. Subunits 1-3 form the functional core of the enzyme complex. CO I is the catalytic subunit of the enzyme. Electrons originating in cytochrome c are transferred via the copper A center of subunit 2 and heme A of subunit 1 to the bimetallic center formed by heme A3 and copper B. In Rickettsia prowazekii (strain Madrid E), this protein is Probable cytochrome c oxidase subunit 1 (ctaD).